The following is a 331-amino-acid chain: N-arachidonyl glycine receptor (331 aa).

Residues 1–26 (MATLSNHNQLDLSNGSHPEEYKIAAL) are Extracellular-facing. N-linked (GlcNAc...) asparagine glycosylation occurs at Asn-14. The helical transmembrane segment at 27 to 47 (VFYSCIFLIGLFVNVTALWVF) threads the bilayer. Over 48–56 (SCTTKKRTT) the chain is Cytoplasmic. A helical membrane pass occupies residues 57-77 (VTIYMMNVALLDLVFILSLPF). The Extracellular portion of the chain corresponds to 78–95 (RMFYYAKGEWPFGEYFCH). Cys-94 and Cys-172 form a disulfide bridge. The helical transmembrane segment at 96-116 (ILGALVVFYPSLALWLLAFIS) threads the bilayer. Over 117 to 138 (ADRYMAIVQPKYAKELKNTGKA) the chain is Cytoplasmic. A helical transmembrane segment spans residues 139 to 159 (VLACGGVWVMTLTTTVPLLLL). The Extracellular segment spans residues 160–191 (YEDPDKASSPATCLKISDITHLKAVNVLNFTR). The N-linked (GlcNAc...) asparagine glycan is linked to Asn-188. Residues 192-212 (LIFFFLIPLFIMIGCYVVIIH) form a helical membrane-spanning segment. At 213–236 (SLLRGQTSKLKPKVKEKSIRIIMT) the chain is on the cytoplasmic side. Residues 237 to 257 (LLLQVLVCFVPFHICFAVLML) form a helical membrane-spanning segment. At 258–268 (QGQENSYSPWG) the chain is on the extracellular side. A helical membrane pass occupies residues 269-289 (AFTTFLMNLSTCLDVVLYYIV). Topologically, residues 290–331 (SKQFQARVISVMLYRNYLRSVRRKSVRSGSLRSLSNMNSEML) are cytoplasmic. Residue Ser-322 is modified to Phosphoserine.

Belongs to the G-protein coupled receptor 1 family. As to expression, expressed in the eye including cornea, retina, iris and ciliary epithelium (at protein level). Expressed in spleen, liver and lymphocytes with highest expression levels in intestinal intraepithelial lymphocytes.

The protein resides in the cell membrane. Its subcellular location is the cytoplasmic vesicle membrane. Functionally, g protein-coupled receptor (GPCR) that plays a role in diverse physiological processes particularly within the immune and nervous systems. Becomes active when triggered by various endogenous ligands including endocannabinoid N-arachidonyl glycine (NAGly), delta-9-tetrahydrocannabinol or resolvin D2/RvD2 derived from the omega-3 fatty acid docosahexaenoic acid (DHA). Upon RvD2 binding, facilitates the resolution of inflammation, aiding in tissue repair and homeostasis. Mechanistically, RvD2 ligation initiates Galphas protein coupling, activation of cAMP-PKA signaling pathway and phosphorylation of STAT3, leading to RvD2-stimulated macrophage phagocytosis. Mediates NAGly-induced process of reorganization of actin filaments and induction of acrosomal exocytosis. Activation by N-arachidonoyl glycine (NAGly) can also induce apoptosis in macrophages. Plays a role in homeostasis of CD8+ subsets of intraepithelial lymphocytes (IELs) (CD8alphaalpha and CD8alphabeta IELs) in small intestine by supporting preferential migration of CD8alphaalpha T-cells to intraepithelial compartment over lamina propria compartment, and by mediating their reconstitution into small intestine after bone marrow transplant. Also participates in hypotensive responses, mediating reduction in intraocular and blood pressure. The sequence is that of N-arachidonyl glycine receptor from Mus musculus (Mouse).